The primary structure comprises 390 residues: MSAAKQLFKIVPLTPTEINFLQSLAPVVKEHGVTVTSTMYKYMFQTYPEVRSYFNMTNQKTGRQPKVLAFSLYQYILHLNDLTPISGFVNQIVLKHCGLGIKPDQYPVVGESLVQAFKMVLGEAADEHFVEVFKKAYGNLAQTLIDAEASVYKTLAWEEFKDFRVTKLVKEAEDVTSVYLTPVDGFKLKPIIPGEYISFRWDIHNPDITDIQPREYSISQDVKENEYRISVRDIGIVSDYINKKLQVGDIVPVHAPVGTMKYDSISKKGKVAVLAGGIGITPMIPIIEHALKDGKDVELYYSNRSYQSEPFREFFSNLEKENNGKFKLNNYISAENQKLQVKDLEHINPDEYDVYLLGPVAYMHEFKTYLVGKGVSDLKMEFFGPTDPDC.

N-acetylserine is present on S2. In terms of domain architecture, Globin spans 12 to 149 (PLTPTEINFL…LAQTLIDAEA (138 aa)). H96 is a heme b binding site. Active-site charge relay system residues include Y106 and E148. The interval 157–390 (WEEFKDFRVT…EFFGPTDPDC (234 aa)) is reductase. The 106-residue stretch at 158 to 263 (EEFKDFRVTK…HAPVGTMKYD (106 aa)) folds into the FAD-binding FR-type domain. FAD-binding positions include Y196 and 214-217 (REYS). Residue 277–282 (GIGITP) participates in NADP(+) binding. 382 to 385 (FFGP) serves as a coordination point for FAD.

The protein belongs to the globin family. Two-domain flavohemoproteins subfamily. This sequence in the C-terminal section; belongs to the flavoprotein pyridine nucleotide cytochrome reductase family. It depends on FAD as a cofactor. Heme b is required as a cofactor.

It is found in the cytoplasm. The catalysed reaction is 2 nitric oxide + NADPH + 2 O2 = 2 nitrate + NADP(+) + H(+). It carries out the reaction 2 nitric oxide + NADH + 2 O2 = 2 nitrate + NAD(+) + H(+). Its function is as follows. Is involved in NO detoxification in an aerobic process, termed nitric oxide dioxygenase (NOD) reaction that utilizes O(2) and NAD(P)H to convert NO to nitrate, which protects the fungus from various noxious nitrogen compounds. Therefore, plays a central role in the inducible response to nitrosative stress. In terms of biological role, in the presence of oxygen and NADH, it has NADH oxidase activity, which leads to the generation of superoxide and H(2)O(2). Under anaerobic conditions, it also exhibits nitric oxide reductase and FAD reductase activities. However, all these reactions are much lower than NOD activity. This is Flavohemoprotein from Candida norvegensis (Yeast).